We begin with the raw amino-acid sequence, 319 residues long: 4-hydroxy-3-methylbut-2-enyl diphosphate reductase (319 aa).

Residue Cys-17 participates in [4Fe-4S] cluster binding. The (2E)-4-hydroxy-3-methylbut-2-enyl diphosphate site is built by His-46 and His-79. The dimethylallyl diphosphate site is built by His-46 and His-79. Isopentenyl diphosphate is bound by residues His-46 and His-79. Cys-101 contributes to the [4Fe-4S] cluster binding site. Position 129 (His-129) interacts with (2E)-4-hydroxy-3-methylbut-2-enyl diphosphate. His-129 contributes to the dimethylallyl diphosphate binding site. His-129 provides a ligand contact to isopentenyl diphosphate. Residue Glu-131 is the Proton donor of the active site. A (2E)-4-hydroxy-3-methylbut-2-enyl diphosphate-binding site is contributed by Thr-170. Cys-200 contacts [4Fe-4S] cluster. 4 residues coordinate (2E)-4-hydroxy-3-methylbut-2-enyl diphosphate: Ser-228, Ser-229, Asn-230, and Ser-273. Positions 228, 229, 230, and 273 each coordinate dimethylallyl diphosphate. Ser-228, Ser-229, Asn-230, and Ser-273 together coordinate isopentenyl diphosphate.

Belongs to the IspH family. The cofactor is [4Fe-4S] cluster.

It catalyses the reaction isopentenyl diphosphate + 2 oxidized [2Fe-2S]-[ferredoxin] + H2O = (2E)-4-hydroxy-3-methylbut-2-enyl diphosphate + 2 reduced [2Fe-2S]-[ferredoxin] + 2 H(+). The catalysed reaction is dimethylallyl diphosphate + 2 oxidized [2Fe-2S]-[ferredoxin] + H2O = (2E)-4-hydroxy-3-methylbut-2-enyl diphosphate + 2 reduced [2Fe-2S]-[ferredoxin] + 2 H(+). The protein operates within isoprenoid biosynthesis; dimethylallyl diphosphate biosynthesis; dimethylallyl diphosphate from (2E)-4-hydroxy-3-methylbutenyl diphosphate: step 1/1. It participates in isoprenoid biosynthesis; isopentenyl diphosphate biosynthesis via DXP pathway; isopentenyl diphosphate from 1-deoxy-D-xylulose 5-phosphate: step 6/6. Catalyzes the conversion of 1-hydroxy-2-methyl-2-(E)-butenyl 4-diphosphate (HMBPP) into a mixture of isopentenyl diphosphate (IPP) and dimethylallyl diphosphate (DMAPP). Acts in the terminal step of the DOXP/MEP pathway for isoprenoid precursor biosynthesis. The protein is 4-hydroxy-3-methylbut-2-enyl diphosphate reductase of Cereibacter sphaeroides (strain ATCC 17023 / DSM 158 / JCM 6121 / CCUG 31486 / LMG 2827 / NBRC 12203 / NCIMB 8253 / ATH 2.4.1.) (Rhodobacter sphaeroides).